Consider the following 126-residue polypeptide: Larval cuticle protein 2 (126 aa).

An N-terminal signal peptide occupies residues 1 to 16; it reads MFKFVMVFAVLGLAAA. Positions 39-100 constitute a Chitin-binding type R&amp;R domain; it reads ADGFDTDLVV…PVGAVLPTPP (62 aa).

Its function is as follows. Component of the larval cuticle. The polypeptide is Larval cuticle protein 2 (Lcp2) (Drosophila miranda (Fruit fly)).